A 465-amino-acid polypeptide reads, in one-letter code: Ribulose bisphosphate carboxylase large chain (465 aa).

Residue lysine 4 is modified to N6,N6,N6-trimethyllysine. Substrate-binding residues include asparagine 113 and threonine 163. Lysine 165 acts as the Proton acceptor in catalysis. Lysine 167 serves as a coordination point for substrate. 3 residues coordinate Mg(2+): lysine 191, aspartate 193, and glutamate 194. Lysine 191 is modified (N6-carboxylysine). The active-site Proton acceptor is histidine 284. Arginine 285, histidine 317, and serine 369 together coordinate substrate.

This sequence belongs to the RuBisCO large chain family. Type I subfamily. As to quaternary structure, heterohexadecamer of 8 large chains and 8 small chains; disulfide-linked. The disulfide link is formed within the large subunit homodimers. It depends on Mg(2+) as a cofactor. The disulfide bond which can form in the large chain dimeric partners within the hexadecamer appears to be associated with oxidative stress and protein turnover.

Its subcellular location is the plastid. It is found in the chloroplast. The enzyme catalyses 2 (2R)-3-phosphoglycerate + 2 H(+) = D-ribulose 1,5-bisphosphate + CO2 + H2O. It carries out the reaction D-ribulose 1,5-bisphosphate + O2 = 2-phosphoglycolate + (2R)-3-phosphoglycerate + 2 H(+). In terms of biological role, ruBisCO catalyzes two reactions: the carboxylation of D-ribulose 1,5-bisphosphate, the primary event in carbon dioxide fixation, as well as the oxidative fragmentation of the pentose substrate in the photorespiration process. Both reactions occur simultaneously and in competition at the same active site. This is Ribulose bisphosphate carboxylase large chain from Morus rubra (Red mulberry).